An 889-amino-acid polypeptide reads, in one-letter code: Mixed-linked glucan synthase 2 (889 aa).

The tract at residues 34–53 is disordered; that stretch reads AGADGQNGRRSPVAKRVNDG. 2 helical membrane passes run 93–113 and 123–143; these read ILHPYRFLILLRLIAIVAFFA and GVWLWTMSMVGDVWFGFSWVL. Residue D213 is part of the active site. Residues 265-293 are a coiled coil; the sequence is ELMSDHRRVRREYEEFKVRIDSLSSTIRQ. Substrate-binding residues include D411 and D413. D579 is a catalytic residue. Helical transmembrane passes span 655-675, 685-705, 723-743, 777-797, 811-831, and 842-862; these read TYPIVTVFIFFYNLFPVMWLI, FGEYLLYLVAVIAMIHVIGMF, FYMIGSTGVYPTAVLYMALKL, LLIPTIVIIVVNVAAVGVAVG, LAVLGMVFNVWILVLLYPFAL, and AVLFVAMAMAVAAVAAMYVAF.

The protein belongs to the glycosyltransferase 2 family. Plant cellulose synthase-like F subfamily.

The protein localises to the golgi apparatus membrane. In terms of biological role, catalyzes both beta-1,3 and beta-1,4 glycosidic linkage on beta-D-glucan. Essential for (1,3;1,4)-beta-D-glucans synthesis in grasses and cereals (Poaceae). The mixed-linked glucans (which are not present in walls of dicotyledons or most other monocotyledonous plants) are particularly important constituents of the walls of the starchy endosperm and aleurone cells of cereal grains such as oats, wheat, rice and barley. They can account for up to 70% by weight of the wall. This is Mixed-linked glucan synthase 2 (CSLF2) from Oryza sativa subsp. japonica (Rice).